Here is a 429-residue protein sequence, read N- to C-terminus: Histidine--tRNA ligase (429 aa).

This sequence belongs to the class-II aminoacyl-tRNA synthetase family. As to quaternary structure, homodimer.

It localises to the cytoplasm. The catalysed reaction is tRNA(His) + L-histidine + ATP = L-histidyl-tRNA(His) + AMP + diphosphate + H(+). This Desulfotalea psychrophila (strain LSv54 / DSM 12343) protein is Histidine--tRNA ligase.